We begin with the raw amino-acid sequence, 131 residues long: uncharacterized protein (131 aa).

The signal sequence occupies residues 1–19 (MRESLFIIFFQFVCHSSNS). 2 helical membrane-spanning segments follow: residues 33–53 (PLLT…ALFF) and 111–131 (VSFN…FFLF).

Its subcellular location is the membrane. This is an uncharacterized protein from Saccharomyces cerevisiae (strain ATCC 204508 / S288c) (Baker's yeast).